Consider the following 278-residue polypeptide: tRNA (guanine-N(7)-)-methyltransferase (278 aa).

The tract at residues 1-42 (MRHDGPMHVQPGVGLQSDTSSSTGTGSGPADEPEAEKSAWGY) is disordered. S-adenosyl-L-methionine-binding residues include Glu106, Glu131, Asn160, and Asp183. Asp183 is a catalytic residue. Residues Lys187, Asp219, and 256 to 259 (TKYE) contribute to the substrate site.

This sequence belongs to the class I-like SAM-binding methyltransferase superfamily. TrmB family.

It catalyses the reaction guanosine(46) in tRNA + S-adenosyl-L-methionine = N(7)-methylguanosine(46) in tRNA + S-adenosyl-L-homocysteine. It participates in tRNA modification; N(7)-methylguanine-tRNA biosynthesis. Catalyzes the formation of N(7)-methylguanine at position 46 (m7G46) in tRNA. This Mycobacterium ulcerans (strain Agy99) protein is tRNA (guanine-N(7)-)-methyltransferase.